Here is a 250-residue protein sequence, read N- to C-terminus: Phosphoribosylaminoimidazole-succinocarboxamide synthase (250 aa).

Belongs to the SAICAR synthetase family.

The enzyme catalyses 5-amino-1-(5-phospho-D-ribosyl)imidazole-4-carboxylate + L-aspartate + ATP = (2S)-2-[5-amino-1-(5-phospho-beta-D-ribosyl)imidazole-4-carboxamido]succinate + ADP + phosphate + 2 H(+). The protein operates within purine metabolism; IMP biosynthesis via de novo pathway; 5-amino-1-(5-phospho-D-ribosyl)imidazole-4-carboxamide from 5-amino-1-(5-phospho-D-ribosyl)imidazole-4-carboxylate: step 1/2. The chain is Phosphoribosylaminoimidazole-succinocarboxamide synthase from Bifidobacterium longum subsp. infantis (strain ATCC 15697 / DSM 20088 / JCM 1222 / NCTC 11817 / S12).